Here is a 140-residue protein sequence, read N- to C-terminus: Flagellar assembly factor FliW (140 aa).

It belongs to the FliW family. Interacts with translational regulator CsrA and flagellin(s).

It is found in the cytoplasm. Acts as an anti-CsrA protein, binds CsrA and prevents it from repressing translation of its target genes, one of which is flagellin. Binds to flagellin and participates in the assembly of the flagellum. The sequence is that of Flagellar assembly factor FliW from Syntrophotalea carbinolica (strain DSM 2380 / NBRC 103641 / GraBd1) (Pelobacter carbinolicus).